A 242-amino-acid polypeptide reads, in one-letter code: Aspartate/glutamate leucyltransferase (242 aa).

Belongs to the R-transferase family. Bpt subfamily.

It is found in the cytoplasm. The enzyme catalyses N-terminal L-glutamyl-[protein] + L-leucyl-tRNA(Leu) = N-terminal L-leucyl-L-glutamyl-[protein] + tRNA(Leu) + H(+). It catalyses the reaction N-terminal L-aspartyl-[protein] + L-leucyl-tRNA(Leu) = N-terminal L-leucyl-L-aspartyl-[protein] + tRNA(Leu) + H(+). In terms of biological role, functions in the N-end rule pathway of protein degradation where it conjugates Leu from its aminoacyl-tRNA to the N-termini of proteins containing an N-terminal aspartate or glutamate. The sequence is that of Aspartate/glutamate leucyltransferase from Chromobacterium violaceum (strain ATCC 12472 / DSM 30191 / JCM 1249 / CCUG 213 / NBRC 12614 / NCIMB 9131 / NCTC 9757 / MK).